The primary structure comprises 171 residues: Ponticulin-like protein F (171 aa).

A signal peptide spans 1-20 (MKFIPALIIFVFTIFALTNS). A lipid anchor (GPI-like-anchor amidated glycine) is attached at Gly149. A propeptide spans 150 to 171 (TSSTIVIPFALILSLLLSVITL) (removed in mature form).

Belongs to the ponticulin family. Post-translationally, the GPI-like-anchor contains a phosphoceramide group, rather than a phosphatidyl group.

Its subcellular location is the cell membrane. In Dictyostelium discoideum (Social amoeba), this protein is Ponticulin-like protein F (ponF).